A 138-amino-acid chain; its full sequence is uncharacterized protein (138 aa).

35-42 contributes to the ATP binding site; the sequence is DFIGSFYN.

This is an uncharacterized protein from Acanthamoeba polyphaga mimivirus (APMV).